The following is a 273-amino-acid chain: uncharacterized protein (273 aa).

10–34 is a binding site for NAD(+); it reads VITGAATGIGQATAEVFANEGARVI. Residue S142 participates in substrate binding. Y155 functions as the Proton acceptor in the catalytic mechanism.

Belongs to the short-chain dehydrogenases/reductases (SDR) family.

This is an uncharacterized protein from Bacillus subtilis (strain 168).